The chain runs to 353 residues: Photosystem II protein D1 (353 aa).

Threonine 2 is modified (N-acetylthreonine). The residue at position 2 (threonine 2) is a Phosphothreonine. A run of 3 helical transmembrane segments spans residues 29-46 (YIGW…TATS), 118-133 (HFLL…EWEL), and 142-156 (WIAV…AATA). Position 118 (histidine 118) interacts with chlorophyll a. A pheophytin a-binding site is contributed by tyrosine 126. [CaMn4O5] cluster-binding residues include aspartate 170 and glutamate 189. A helical membrane pass occupies residues 197–218 (FHMLGVAGVFGGSLFSAMHGSL). A chlorophyll a-binding site is contributed by histidine 198. A quinone is bound by residues histidine 215 and 264-265 (SF). Fe cation is bound at residue histidine 215. Histidine 272 lines the Fe cation pocket. Residues 274–288 (FLAAWPVVGIWFTAL) traverse the membrane as a helical segment. [CaMn4O5] cluster contacts are provided by histidine 332, glutamate 333, aspartate 342, and alanine 344. Residues 345–353 (AVEVPSTNG) constitute a propeptide that is removed on maturation.

This sequence belongs to the reaction center PufL/M/PsbA/D family. In terms of assembly, PSII is composed of 1 copy each of membrane proteins PsbA, PsbB, PsbC, PsbD, PsbE, PsbF, PsbH, PsbI, PsbJ, PsbK, PsbL, PsbM, PsbT, PsbX, PsbY, PsbZ, Psb30/Ycf12, at least 3 peripheral proteins of the oxygen-evolving complex and a large number of cofactors. It forms dimeric complexes. It depends on The D1/D2 heterodimer binds P680, chlorophylls that are the primary electron donor of PSII, and subsequent electron acceptors. It shares a non-heme iron and each subunit binds pheophytin, quinone, additional chlorophylls, carotenoids and lipids. D1 provides most of the ligands for the Mn4-Ca-O5 cluster of the oxygen-evolving complex (OEC). There is also a Cl(-1) ion associated with D1 and D2, which is required for oxygen evolution. The PSII complex binds additional chlorophylls, carotenoids and specific lipids. as a cofactor. In terms of processing, tyr-161 forms a radical intermediate that is referred to as redox-active TyrZ, YZ or Y-Z. Post-translationally, C-terminally processed by CTPA; processing is essential to allow assembly of the oxygen-evolving complex and thus photosynthetic growth.

The protein resides in the plastid. It localises to the chloroplast thylakoid membrane. The enzyme catalyses 2 a plastoquinone + 4 hnu + 2 H2O = 2 a plastoquinol + O2. Functionally, photosystem II (PSII) is a light-driven water:plastoquinone oxidoreductase that uses light energy to abstract electrons from H(2)O, generating O(2) and a proton gradient subsequently used for ATP formation. It consists of a core antenna complex that captures photons, and an electron transfer chain that converts photonic excitation into a charge separation. The D1/D2 (PsbA/PsbD) reaction center heterodimer binds P680, the primary electron donor of PSII as well as several subsequent electron acceptors. This chain is Photosystem II protein D1, found in Calycanthus floridus var. glaucus (Eastern sweetshrub).